The chain runs to 204 residues: N-(5'-phosphoribosyl)anthranilate isomerase (204 aa).

This sequence belongs to the TrpF family.

It catalyses the reaction N-(5-phospho-beta-D-ribosyl)anthranilate = 1-(2-carboxyphenylamino)-1-deoxy-D-ribulose 5-phosphate. Its pathway is amino-acid biosynthesis; L-tryptophan biosynthesis; L-tryptophan from chorismate: step 3/5. This Bacillus cereus (strain B4264) protein is N-(5'-phosphoribosyl)anthranilate isomerase.